Consider the following 181-residue polypeptide: Large ribosomal subunit protein uL6 (181 aa).

The protein belongs to the universal ribosomal protein uL6 family. As to quaternary structure, part of the 50S ribosomal subunit.

Its function is as follows. This protein binds to the 23S rRNA, and is important in its secondary structure. It is located near the subunit interface in the base of the L7/L12 stalk, and near the tRNA binding site of the peptidyltransferase center. The protein is Large ribosomal subunit protein uL6 of Desulforudis audaxviator (strain MP104C).